The chain runs to 556 residues: 2-succinyl-5-enolpyruvyl-6-hydroxy-3-cyclohexene-1-carboxylate synthase (556 aa).

It belongs to the TPP enzyme family. MenD subfamily. As to quaternary structure, homodimer. Requires Mg(2+) as cofactor. Mn(2+) is required as a cofactor. Thiamine diphosphate serves as cofactor.

The enzyme catalyses isochorismate + 2-oxoglutarate + H(+) = 5-enolpyruvoyl-6-hydroxy-2-succinyl-cyclohex-3-ene-1-carboxylate + CO2. It participates in quinol/quinone metabolism; 1,4-dihydroxy-2-naphthoate biosynthesis; 1,4-dihydroxy-2-naphthoate from chorismate: step 2/7. Its pathway is quinol/quinone metabolism; menaquinone biosynthesis. Its function is as follows. Catalyzes the thiamine diphosphate-dependent decarboxylation of 2-oxoglutarate and the subsequent addition of the resulting succinic semialdehyde-thiamine pyrophosphate anion to isochorismate to yield 2-succinyl-5-enolpyruvyl-6-hydroxy-3-cyclohexene-1-carboxylate (SEPHCHC). This chain is 2-succinyl-5-enolpyruvyl-6-hydroxy-3-cyclohexene-1-carboxylate synthase, found in Escherichia coli (strain ATCC 8739 / DSM 1576 / NBRC 3972 / NCIMB 8545 / WDCM 00012 / Crooks).